A 197-amino-acid polypeptide reads, in one-letter code: MSKVLFINASPVANEASFSYQLAKTFESEYLKLNPSDQVSWLDLNELDKGSMTLTSKNSKEHFKDENVDPLINQIKSVDKLVVIAPMTNFNYPATLKNWLDKICVANKTFSYKYSKKGGSIGLMDHLKVMIINTQGAPEGWYAFADVTVLLKGVFEFIGAMVDSIKVAGTKVEYLNKQPKEIVEPNLALIKEKAKNF.

FMN-binding positions include Ser-10 and 17 to 19 (SFS).

Belongs to the azoreductase type 1 family. Homodimer. The cofactor is FMN.

It catalyses the reaction 2 a quinone + NADH + H(+) = 2 a 1,4-benzosemiquinone + NAD(+). It carries out the reaction N,N-dimethyl-1,4-phenylenediamine + anthranilate + 2 NAD(+) = 2-(4-dimethylaminophenyl)diazenylbenzoate + 2 NADH + 2 H(+). Its function is as follows. Quinone reductase that provides resistance to thiol-specific stress caused by electrophilic quinones. In terms of biological role, also exhibits azoreductase activity. Catalyzes the reductive cleavage of the azo bond in aromatic azo compounds to the corresponding amines. The protein is FMN-dependent NADH:quinone oxidoreductase of Mycoplasmoides gallisepticum (strain R(low / passage 15 / clone 2)) (Mycoplasma gallisepticum).